The sequence spans 847 residues: Alpha-glucuronidase A (847 aa).

The N-terminal stretch at 1–22 (MRSFLLLTALLGVAAVAEDGLA) is a signal peptide. 13 N-linked (GlcNAc...) asparagine glycosylation sites follow: N48, N78, N227, N315, N349, N457, N472, N534, N583, N689, N738, N739, and N769.

It belongs to the glycosyl hydrolase 67 family.

The protein resides in the secreted. The catalysed reaction is an alpha-D-glucuronoside + H2O = D-glucuronate + an alcohol. Alpha-glucuronidase involved in the hydrolysis of xylan, a major structural heterogeneous polysaccharide found in plant biomass representing the second most abundant polysaccharide in the biosphere, after cellulose. Releases 4-O-methylglucuronic acid from xylan. This chain is Alpha-glucuronidase A (aguA), found in Emericella nidulans (strain FGSC A4 / ATCC 38163 / CBS 112.46 / NRRL 194 / M139) (Aspergillus nidulans).